Reading from the N-terminus, the 202-residue chain is Small ribosomal subunit protein uS4 (202 aa).

Residues 93–155 form the S4 RNA-binding domain; that stretch reads RRLDNVVRRV…ENLKNLYRGV (63 aa).

This sequence belongs to the universal ribosomal protein uS4 family. In terms of assembly, part of the 30S ribosomal subunit. Contacts protein S5. The interaction surface between S4 and S5 is involved in control of translational fidelity.

One of the primary rRNA binding proteins, it binds directly to 16S rRNA where it nucleates assembly of the body of the 30S subunit. Its function is as follows. With S5 and S12 plays an important role in translational accuracy. This Rhodopirellula baltica (strain DSM 10527 / NCIMB 13988 / SH1) protein is Small ribosomal subunit protein uS4.